Reading from the N-terminus, the 183-residue chain is Disulfide bond formation protein B 2 (183 aa).

At 1–9 (MSLACSRSL) the chain is on the cytoplasmic side. The helical transmembrane segment at 10–26 (FFMAFTAGILALGASYY) threads the bilayer. The Periplasmic portion of the chain corresponds to 27 to 44 (LEYAVGLVPCSLCLVQRL). Cys-36 and Cys-39 are disulfide-bonded. A helical transmembrane segment spans residues 45–61 (FMSVLTLCCGLAAVHGP). Residues 62-68 (QRVGLSL) lie on the Cytoplasmic side of the membrane. A helical membrane pass occupies residues 69-85 (YWMVTLLSSLGGTTAAW). Residues 86–142 (RQVLFQSDSLQELAHCAPNPEEMFSSLPWLCALMRMFNDTADCAELSWTLFDLSIPE) are Periplasmic-facing. Cys-101 and Cys-128 form a disulfide bridge. A helical transmembrane segment spans residues 143–161 (WSLLFFVGMSILAVYQLLR). The Cytoplasmic portion of the chain corresponds to 162–183 (QVWMALQRPLSGQPSHPALVRD).

The protein belongs to the DsbB family.

It is found in the cell inner membrane. Functionally, required for disulfide bond formation in some periplasmic proteins. Acts by oxidizing the DsbA protein. The chain is Disulfide bond formation protein B 2 from Pseudomonas fluorescens (strain Pf0-1).